We begin with the raw amino-acid sequence, 457 residues long: Oxygen-independent coproporphyrinogen III oxidase (457 aa).

In terms of domain architecture, Radical SAM core spans 47 to 279 (LKNPMPLSLY…EILESLISFL (233 aa)). Tyrosine 56 contributes to the S-adenosyl-L-methionine binding site. [4Fe-4S] cluster contacts are provided by cysteine 62 and cysteine 66. Residue phenylalanine 68 coordinates S-adenosyl-L-methionine. Cysteine 69 provides a ligand contact to [4Fe-4S] cluster. Residues glycine 113, 114–115 (GT), glutamate 147, glutamine 174, arginine 186, aspartate 211, alanine 245, and isoleucine 331 contribute to the S-adenosyl-L-methionine site.

It belongs to the anaerobic coproporphyrinogen-III oxidase family. Monomer. [4Fe-4S] cluster serves as cofactor.

It localises to the cytoplasm. The catalysed reaction is coproporphyrinogen III + 2 S-adenosyl-L-methionine = protoporphyrinogen IX + 2 5'-deoxyadenosine + 2 L-methionine + 2 CO2. The protein operates within porphyrin-containing compound metabolism; protoporphyrin-IX biosynthesis; protoporphyrinogen-IX from coproporphyrinogen-III (AdoMet route): step 1/1. Functionally, involved in the heme biosynthesis. Catalyzes the anaerobic oxidative decarboxylation of propionate groups of rings A and B of coproporphyrinogen III to yield the vinyl groups in protoporphyrinogen IX. The protein is Oxygen-independent coproporphyrinogen III oxidase (hemN) of Helicobacter pylori (strain ATCC 700392 / 26695) (Campylobacter pylori).